Reading from the N-terminus, the 195-residue chain is Protein GrpE (195 aa).

This sequence belongs to the GrpE family. Homodimer.

The protein localises to the cytoplasm. Functionally, participates actively in the response to hyperosmotic and heat shock by preventing the aggregation of stress-denatured proteins, in association with DnaK and GrpE. It is the nucleotide exchange factor for DnaK and may function as a thermosensor. Unfolded proteins bind initially to DnaJ; upon interaction with the DnaJ-bound protein, DnaK hydrolyzes its bound ATP, resulting in the formation of a stable complex. GrpE releases ADP from DnaK; ATP binding to DnaK triggers the release of the substrate protein, thus completing the reaction cycle. Several rounds of ATP-dependent interactions between DnaJ, DnaK and GrpE are required for fully efficient folding. The chain is Protein GrpE from Francisella tularensis subsp. mediasiatica (strain FSC147).